A 289-amino-acid chain; its full sequence is Nitrogenase iron protein (289 aa).

8 to 15 contacts ATP; the sequence is GKGGIGKS. Residue C96 coordinates [4Fe-4S] cluster. The residue at position 99 (R99) is an ADP-ribosylarginine; by dinitrogenase reductase ADP-ribosyltransferase. C130 contacts [4Fe-4S] cluster.

The protein belongs to the NifH/BchL/ChlL family. As to quaternary structure, homodimer. Requires [4Fe-4S] cluster as cofactor. The reversible ADP-ribosylation of Arg-99 inactivates the nitrogenase reductase and regulates nitrogenase activity.

The catalysed reaction is N2 + 8 reduced [2Fe-2S]-[ferredoxin] + 16 ATP + 16 H2O = H2 + 8 oxidized [2Fe-2S]-[ferredoxin] + 2 NH4(+) + 16 ADP + 16 phosphate + 6 H(+). In terms of biological role, the key enzymatic reactions in nitrogen fixation are catalyzed by the nitrogenase complex, which has 2 components: the iron protein and the molybdenum-iron protein. The sequence is that of Nitrogenase iron protein from Parafrankia sp. (strain EAN1pec).